The following is a 119-amino-acid chain: Large ribosomal subunit protein uL24 (119 aa).

The protein belongs to the universal ribosomal protein uL24 family. Part of the 50S ribosomal subunit.

In terms of biological role, one of two assembly initiator proteins, it binds directly to the 5'-end of the 23S rRNA, where it nucleates assembly of the 50S subunit. One of the proteins that surrounds the polypeptide exit tunnel on the outside of the subunit. This chain is Large ribosomal subunit protein uL24, found in Arthrobacter sp. (strain FB24).